Consider the following 546-residue polypeptide: Chaperonin GroEL (546 aa).

ATP is bound by residues 30 to 33, Lys51, 87 to 91, Gly415, 478 to 480, and Asp494; these read TMGP, DGTTT, and NAA.

The protein belongs to the chaperonin (HSP60) family. Forms a cylinder of 14 subunits composed of two heptameric rings stacked back-to-back. Interacts with the co-chaperonin GroES.

The protein resides in the cytoplasm. It carries out the reaction ATP + H2O + a folded polypeptide = ADP + phosphate + an unfolded polypeptide.. Functionally, together with its co-chaperonin GroES, plays an essential role in assisting protein folding. The GroEL-GroES system forms a nano-cage that allows encapsulation of the non-native substrate proteins and provides a physical environment optimized to promote and accelerate protein folding. The polypeptide is Chaperonin GroEL (Wolinella succinogenes (strain ATCC 29543 / DSM 1740 / CCUG 13145 / JCM 31913 / LMG 7466 / NCTC 11488 / FDC 602W) (Vibrio succinogenes)).